Reading from the N-terminus, the 177-residue chain is MSRVAKAPVAIPAGVEVKLNGQEITIKGAKGELSRVFHKGVVIAQEDNQLTFGPREGVANAWAQAGTARALVKNMVVGVTEGFTKKLVLKGVGYRAAMKGNAVGLTLGFSHPVEHELPEGIKAECPSQTEIVLTGCDKQLVGQVAADIRSYRAPEPYKGKGIRYADENVRSKEAKKK.

This sequence belongs to the universal ribosomal protein uL6 family. As to quaternary structure, part of the 50S ribosomal subunit.

Its function is as follows. This protein binds to the 23S rRNA, and is important in its secondary structure. It is located near the subunit interface in the base of the L7/L12 stalk, and near the tRNA binding site of the peptidyltransferase center. In Vibrio cholerae serotype O1 (strain ATCC 39541 / Classical Ogawa 395 / O395), this protein is Large ribosomal subunit protein uL6.